Consider the following 182-residue polypeptide: ATP synthase subunit delta (182 aa).

The protein belongs to the ATPase delta chain family. As to quaternary structure, F-type ATPases have 2 components, F(1) - the catalytic core - and F(0) - the membrane proton channel. F(1) has five subunits: alpha(3), beta(3), gamma(1), delta(1), epsilon(1). F(0) has three main subunits: a(1), b(2) and c(10-14). The alpha and beta chains form an alternating ring which encloses part of the gamma chain. F(1) is attached to F(0) by a central stalk formed by the gamma and epsilon chains, while a peripheral stalk is formed by the delta and b chains.

It localises to the cell inner membrane. F(1)F(0) ATP synthase produces ATP from ADP in the presence of a proton or sodium gradient. F-type ATPases consist of two structural domains, F(1) containing the extramembraneous catalytic core and F(0) containing the membrane proton channel, linked together by a central stalk and a peripheral stalk. During catalysis, ATP synthesis in the catalytic domain of F(1) is coupled via a rotary mechanism of the central stalk subunits to proton translocation. Its function is as follows. This protein is part of the stalk that links CF(0) to CF(1). It either transmits conformational changes from CF(0) to CF(1) or is implicated in proton conduction. This Sulfurihydrogenibium sp. (strain YO3AOP1) protein is ATP synthase subunit delta.